A 420-amino-acid polypeptide reads, in one-letter code: Cytochrome c biogenesis protein Ccs1 (420 aa).

The next 3 helical transmembrane spans lie at 12–32, 71–91, and 157–177; these read LRFSIFLLLLISFCSIVGTVI, TWWFFALIFLFGLSLILCTFL, and IAPILVHLSMILILVGTIVGS.

It belongs to the Ccs1/CcsB family. In terms of assembly, may interact with CcsA.

The protein resides in the plastid. Its subcellular location is the chloroplast thylakoid membrane. Its function is as follows. Required during biogenesis of c-type cytochromes (cytochrome c6 and cytochrome f) at the step of heme attachment. The polypeptide is Cytochrome c biogenesis protein Ccs1 (Phaeodactylum tricornutum (strain CCAP 1055/1)).